Here is a 563-residue protein sequence, read N- to C-terminus: Pentatricopeptide repeat-containing protein At4g39620, chloroplastic (563 aa).

Residues 1-47 constitute a chloroplast transit peptide; sequence MDYLLTSPSSLRFSDFISSIPKETDHKWLRFSVNLGDARRSTRTRIT. 9 PPR repeats span residues 132 to 166, 167 to 197, 207 to 241, 242 to 276, 277 to 311, 312 to 346, 347 to 381, 382 to 416, and 417 to 451; these read DNGV…GCRP, DASV…YLDK, NVVT…PVSP, DVYT…ECKP, DIIT…KEKP, TLPT…NYIP, SFIT…DRVL, KAST…RVHP, and DAST…GIVP. 2 disordered regions span residues 468-501 and 520-551; these read PGSG…FQDK and NLSG…NNMM. A compositionally biased stretch (basic and acidic residues) spans 520 to 537; it reads NLSGHDKGSRDESRKPSQ.

Belongs to the PPR family. P subfamily.

The protein resides in the plastid. Its subcellular location is the chloroplast. Essential for embryo development. The chain is Pentatricopeptide repeat-containing protein At4g39620, chloroplastic from Arabidopsis thaliana (Mouse-ear cress).